A 227-amino-acid polypeptide reads, in one-letter code: Cytidylate kinase (227 aa).

12–20 (GPSGAGKGT) provides a ligand contact to ATP.

Belongs to the cytidylate kinase family. Type 1 subfamily.

The protein resides in the cytoplasm. It carries out the reaction CMP + ATP = CDP + ADP. It catalyses the reaction dCMP + ATP = dCDP + ADP. This chain is Cytidylate kinase, found in Shigella boydii serotype 18 (strain CDC 3083-94 / BS512).